Here is a 372-residue protein sequence, read N- to C-terminus: Cytochrome b (372 aa).

Helical transmembrane passes span 25–45 (FGSMLLTCLALQISTGFFLAI), 69–90 (WTMQNLHAIGASMFFICIYIHI), 105–125 (WLSGTVLLITLMATAFFGYVL), and 170–190 (FFALHFILPFLIVSLSSIHII). Positions 75 and 89 each coordinate heme b. Positions 174 and 188 each coordinate heme b. Histidine 193 provides a ligand contact to a ubiquinone. The next 4 helical transmembrane spans lie at 218 to 238 (YKDILMITVMITTLFSIMAFA), 280 to 300 (LGGTLALLMSVIILTTAPFTH), 312 to 332 (LAQMLFWTLIATFITITWTAT), and 339 to 358 (FILISQMASIIYFSFFIINP).

It belongs to the cytochrome b family. As to quaternary structure, the cytochrome bc1 complex contains 3 respiratory subunits (MT-CYB, CYC1 and UQCRFS1), 2 core proteins (UQCRC1 and UQCRC2) and probably 6 low-molecular weight proteins. Requires heme b as cofactor.

It is found in the mitochondrion inner membrane. Functionally, component of the ubiquinol-cytochrome c reductase complex (complex III or cytochrome b-c1 complex) that is part of the mitochondrial respiratory chain. The b-c1 complex mediates electron transfer from ubiquinol to cytochrome c. Contributes to the generation of a proton gradient across the mitochondrial membrane that is then used for ATP synthesis. The protein is Cytochrome b (MT-CYB) of Acanthophis antarcticus (Common death adder).